A 473-amino-acid polypeptide reads, in one-letter code: Phosphatidylserine synthase 1 (473 aa).

Position 2 is an N-acetylalanine (Ala2). Over 2–35 the chain is Cytoplasmic; the sequence is ASCVGSRTLSKDDVNYKMHFRMINEQQVEDITID. Residues 36 to 56 form a helical membrane-spanning segment; the sequence is FFYRPHTITLLSFTIVSLMYF. Topologically, residues 57–72 are lumenal; sequence AFTRDDSVPEDNIWRG. The chain crosses the membrane as a helical span at residues 73-93; it reads ILSVIFFFLIISVLAFPNGPF. Topologically, residues 94–102 are cytoplasmic; it reads TRPHPALWR. A helical membrane pass occupies residues 103–123; it reads MVFGLSVLYFLFLVFLLFLNF. Residues 124-186 are Lumenal-facing; it reads EQVKSLMYWL…AMKALLIRSY (63 aa). Residues 187-207 form a helical membrane-spanning segment; the sequence is GLCWTISITWELTELFFMHLL. Over 208–216 the chain is Cytoplasmic; that stretch reads PNFAECWWD. The helical transmembrane segment at 217 to 237 threads the bilayer; sequence QVILDILLCNGGGIWLGMVVC. The Lumenal portion of the chain corresponds to 238–286; the sequence is RFLEMRTYHWASFKDIHTTTGKIKRAVLQFTPASWTYVRWFDPKSSFQR. Residues 287 to 307 form a helical membrane-spanning segment; sequence VAGVYLFMIIWQLTELNTFFL. Over 308 to 319 the chain is Cytoplasmic; sequence KHIFVFQASHPL. A helical membrane pass occupies residues 320-342; it reads SWGRILFIGGITAPTVRQYYAYL. Residues 343–355 are Lumenal-facing; sequence TDTQCKRVGTQCW. Residues 356 to 376 traverse the membrane as a helical segment; that stretch reads VFGVIGFLEAIVCIKFGQDLF. Residues 377–383 are Cytoplasmic-facing; the sequence is SKTQILY. A helical transmembrane segment spans residues 384-404; sequence VVLWLLCVAFTTFLCLYGMIW. Topologically, residues 405-473 are lumenal; the sequence is YAEHYGHREK…SKVTNGVGKK (69 aa). 4 positions are modified to phosphoserine: Ser417, Ser425, Ser442, and Ser454. The interval 430 to 473 is disordered; the sequence is WHHRKGTKGSEDSPPKHAGNNESHSSRRRNRHSKSKVTNGVGKK. Residues 455 to 464 show a composition bias toward basic residues; it reads SRRRNRHSKS.

Belongs to the phosphatidyl serine synthase family.

Its subcellular location is the endoplasmic reticulum membrane. It catalyses the reaction a 1,2-diacyl-sn-glycero-3-phosphoethanolamine + L-serine = a 1,2-diacyl-sn-glycero-3-phospho-L-serine + ethanolamine. The enzyme catalyses a 1,2-diacyl-sn-glycero-3-phosphocholine + L-serine = a 1,2-diacyl-sn-glycero-3-phospho-L-serine + choline. The protein operates within phospholipid metabolism; phosphatidylserine biosynthesis. Requires calcium ions. Inhibited by exogenous phosphatidylserine. In terms of biological role, catalyzes a base-exchange reaction in which the polar head group of phosphatidylethanolamine (PE) or phosphatidylcholine (PC) is replaced by L-serine. Catalyzes mainly the conversion of phosphatidylcholine. Also converts, in vitro and to a lesser extent, phosphatidylethanolamine. In Homo sapiens (Human), this protein is Phosphatidylserine synthase 1 (PTDSS1).